Consider the following 306-residue polypeptide: uncharacterized protein (306 aa).

The next 9 helical transmembrane spans lie at 6 to 26 (VQIM…FPGI), 37 to 57 (HLAL…AVLT), 67 to 87 (IPAI…LLNI), 91 to 111 (TVSA…SAML), 125 to 145 (WLGS…AGDF), 148 to 168 (SMSG…YFVF), 177 to 197 (GFIP…LVFL), 213 to 233 (LSIV…LAYV), and 251 to 271 (ALAL…LSLL). EamA domains lie at 17 to 140 (GLWA…LIAF) and 160 to 285 (FSES…FTYL).

The protein belongs to the EamA transporter family.

It localises to the cell membrane. This is an uncharacterized protein from Bacillus subtilis (strain 168).